We begin with the raw amino-acid sequence, 426 residues long: Isocitrate dehydrogenase [NADP] (426 aa).

D-threo-isocitrate-binding residues include Ser123, Asn125, Arg129, Arg139, and Arg162. Asp312 lines the Mg(2+) pocket. Residues 344-350 (HGTAWDI), Asn357, and Lys404 each bind NADP(+).

It belongs to the isocitrate and isopropylmalate dehydrogenases family. As to quaternary structure, homodimer. The cofactor is Mg(2+). Mn(2+) serves as cofactor.

It catalyses the reaction D-threo-isocitrate + NADP(+) = 2-oxoglutarate + CO2 + NADPH. Functionally, catalyzes the oxidative decarboxylation of isocitrate to 2-oxoglutarate and carbon dioxide with the concomitant reduction of NADP(+). The polypeptide is Isocitrate dehydrogenase [NADP] (icd) (Aquifex aeolicus (strain VF5)).